Here is a 957-residue protein sequence, read N- to C-terminus: Vacuolar membrane protease (957 aa).

Residues 1–10 (MARYNPFSFT) lie on the Cytoplasmic side of the membrane. A helical membrane pass occupies residues 11-31 (PGPVVFFTTVIYVGLFAALLV). The Vacuolar segment spans residues 32-369 (THLTVPDYPS…RVFVVFQLHT (338 aa)). N-linked (GlcNAc...) asparagine glycosylation is found at Asn-48, Asn-105, and Asn-136. 2 residues coordinate Zn(2+): His-152 and Asp-164. Catalysis depends on Glu-198, which acts as the Proton acceptor. Zn(2+) is bound by residues Glu-199, Glu-224, and His-297. A helical membrane pass occupies residues 370 to 390 (LFALCVTLLVVAPITLIGLTF). Topologically, residues 391–423 (GLSKADKNYLLARKAFVYSSDDDNPVQLYGWRG) are cytoplasmic. A helical membrane pass occupies residues 424–444 (FFRFPIIFISATAVVVALAYL). Residues 445 to 450 (LVRFNA) lie on the Vacuolar side of the membrane. Residues 451 to 471 (FIIYSSPFAVWSMMLSAWFFV) form a helical membrane-spanning segment. Over 472 to 490 (AWFFSRGADAMRPSALQRM) the chain is Cytoplasmic. A helical transmembrane segment spans residues 491–511 (YALIWLFIGSFVLLTIVTVFV). At 512–521 (NNYQVVAGYP) the chain is on the vacuolar side. The helical transmembrane segment at 522 to 542 (ALFYFAVVFVAIMLSYLELFF) threads the bilayer. Residues 543–642 (APTKSAYARH…YPGEQEWSGK (100 aa)) are Cytoplasmic-facing. Disordered stretches follow at residues 559–586 (SRRN…PVAD) and 603–627 (FTRY…SQRL). Residues 603–613 (FTRYGSRRDSA) are compositionally biased toward basic and acidic residues. Residues 643–663 (LPSWIWIIQLLLLAPLVIVLV) traverse the membrane as a helical segment. Topologically, residues 664 to 685 (GQVALLLTSALYQTPSDGNSPL) are vacuolar. The helical transmembrane segment at 686–706 (FIYLAIAALSVLLLAPTGPFI) threads the bilayer. The Cytoplasmic segment spans residues 707-713 (HRFTYHV). Residues 714–734 (PTFLFLVCLGTVIYNLVAFPF) traverse the membrane as a helical segment. Residues 735–957 (SRDHRLKVYF…LVEGFKRFEI (223 aa)) lie on the Vacuolar side of the membrane. 3 N-linked (GlcNAc...) asparagine glycosylation sites follow: Asn-782, Asn-818, and Asn-834.

Belongs to the peptidase M28 family. Zn(2+) is required as a cofactor.

The protein resides in the vacuole membrane. May be involved in vacuolar sorting and osmoregulation. This is Vacuolar membrane protease from Pyrenophora teres f. teres (strain 0-1) (Barley net blotch fungus).